Reading from the N-terminus, the 94-residue chain is Pyrimidine/purine nucleoside phosphorylase (94 aa).

This sequence belongs to the nucleoside phosphorylase PpnP family.

It catalyses the reaction a purine D-ribonucleoside + phosphate = a purine nucleobase + alpha-D-ribose 1-phosphate. It carries out the reaction adenosine + phosphate = alpha-D-ribose 1-phosphate + adenine. The catalysed reaction is cytidine + phosphate = cytosine + alpha-D-ribose 1-phosphate. The enzyme catalyses guanosine + phosphate = alpha-D-ribose 1-phosphate + guanine. It catalyses the reaction inosine + phosphate = alpha-D-ribose 1-phosphate + hypoxanthine. It carries out the reaction thymidine + phosphate = 2-deoxy-alpha-D-ribose 1-phosphate + thymine. The catalysed reaction is uridine + phosphate = alpha-D-ribose 1-phosphate + uracil. The enzyme catalyses xanthosine + phosphate = alpha-D-ribose 1-phosphate + xanthine. In terms of biological role, catalyzes the phosphorolysis of diverse nucleosides, yielding D-ribose 1-phosphate and the respective free bases. Can use uridine, adenosine, guanosine, cytidine, thymidine, inosine and xanthosine as substrates. Also catalyzes the reverse reactions. This Aeromonas hydrophila subsp. hydrophila (strain ATCC 7966 / DSM 30187 / BCRC 13018 / CCUG 14551 / JCM 1027 / KCTC 2358 / NCIMB 9240 / NCTC 8049) protein is Pyrimidine/purine nucleoside phosphorylase.